A 430-amino-acid chain; its full sequence is Elongation factor Tu (430 aa).

The region spanning 13–220 (RPHLNIGTIG…ACDKYIALPE (208 aa)) is the tr-type G domain. The interval 22 to 29 (GHVDHGKT) is G1. 22–29 (GHVDHGKT) contacts GTP. Threonine 29 contacts Mg(2+). Residues 66 to 70 (GITIS) form a G2 region. Residues 87-90 (DCPG) are G3. GTP is bound by residues 87–91 (DCPGH) and 142–145 (NKCD). The G4 stretch occupies residues 142–145 (NKCD). The segment at 188–190 (SAL) is G5.

The protein belongs to the TRAFAC class translation factor GTPase superfamily. Classic translation factor GTPase family. EF-Tu/EF-1A subfamily. Monomer.

The protein localises to the cytoplasm. It catalyses the reaction GTP + H2O = GDP + phosphate + H(+). GTP hydrolase that promotes the GTP-dependent binding of aminoacyl-tRNA to the A-site of ribosomes during protein biosynthesis. This Neorickettsia sennetsu (strain ATCC VR-367 / Miyayama) (Ehrlichia sennetsu) protein is Elongation factor Tu.